We begin with the raw amino-acid sequence, 870 residues long: Histidine biosynthesis trifunctional protein (870 aa).

The segment at 1–285 (METTLPLPFL…KFVVKQKGRF (285 aa)) is phosphoribosyl-AMP cyclohydrolase. Residues 286-367 (CHLDQSGCFG…FYFALTRAVA (82 aa)) form a phosphoribosyl-ATP pyrophosphohydrolase region. Positions 368–870 (AGVTLADIER…IRLEHMSKSN (503 aa)) are histidinol dehydrogenase. Zn(2+) contacts are provided by Gln693 and His696. Active-site residues include Glu762 and His763. 2 residues coordinate Zn(2+): Asp796 and His855.

It in the C-terminal section; belongs to the histidinol dehydrogenase family. It depends on Zn(2+) as a cofactor.

It carries out the reaction 1-(5-phospho-beta-D-ribosyl)-5'-AMP + H2O = 1-(5-phospho-beta-D-ribosyl)-5-[(5-phospho-beta-D-ribosylamino)methylideneamino]imidazole-4-carboxamide. The catalysed reaction is 1-(5-phospho-beta-D-ribosyl)-ATP + H2O = 1-(5-phospho-beta-D-ribosyl)-5'-AMP + diphosphate + H(+). The enzyme catalyses L-histidinol + 2 NAD(+) + H2O = L-histidine + 2 NADH + 3 H(+). It functions in the pathway amino-acid biosynthesis; L-histidine biosynthesis; L-histidine from 5-phospho-alpha-D-ribose 1-diphosphate: step 2/9. The protein operates within amino-acid biosynthesis; L-histidine biosynthesis; L-histidine from 5-phospho-alpha-D-ribose 1-diphosphate: step 3/9. It participates in amino-acid biosynthesis; L-histidine biosynthesis; L-histidine from 5-phospho-alpha-D-ribose 1-diphosphate: step 9/9. The sequence is that of Histidine biosynthesis trifunctional protein (his-3) from Neurospora crassa (strain ATCC 24698 / 74-OR23-1A / CBS 708.71 / DSM 1257 / FGSC 987).